The chain runs to 89 residues: Small ribosomal subunit protein uS15 (89 aa).

A compositionally biased stretch (basic and acidic residues) spans 1 to 21 (MALTTEEKKQVLSEYGLHETD). A disordered region spans residues 1–24 (MALTTEEKKQVLSEYGLHETDTGS).

Belongs to the universal ribosomal protein uS15 family. Part of the 30S ribosomal subunit. Forms a bridge to the 50S subunit in the 70S ribosome, contacting the 23S rRNA.

One of the primary rRNA binding proteins, it binds directly to 16S rRNA where it helps nucleate assembly of the platform of the 30S subunit by binding and bridging several RNA helices of the 16S rRNA. Its function is as follows. Forms an intersubunit bridge (bridge B4) with the 23S rRNA of the 50S subunit in the ribosome. This chain is Small ribosomal subunit protein uS15, found in Rhodococcus jostii (strain RHA1).